A 701-amino-acid polypeptide reads, in one-letter code: Glycine--tRNA ligase beta subunit (701 aa).

It belongs to the class-II aminoacyl-tRNA synthetase family. In terms of assembly, tetramer of two alpha and two beta subunits.

The protein localises to the cytoplasm. It catalyses the reaction tRNA(Gly) + glycine + ATP = glycyl-tRNA(Gly) + AMP + diphosphate. The protein is Glycine--tRNA ligase beta subunit of Anaeromyxobacter sp. (strain K).